A 346-amino-acid chain; its full sequence is FCTPMMDLADEFGIPSYIFFASGGGFLGFMLYVQKIHDEENFNPIEFKDSDTELIVPSLVNPFPTRILPSSILNKERFGQLLAIAKKFRQAKGIIVNTFLELESRAIESFKVPPLYHVGPILDVKSDGRNTHPEIMQWLDDQPEGSVVFLCFGSMGSFSEDQLKEIAYALENSGHRFLWSIRRPPPPDKIASPTDYEDPRDVLPEGFLERTVAVGKVIGWAPQVAVLAHPAIGGFVSHCGWNSVLESLWFGVPIATWPMYAEQQFNAFEMVVELGLGVEIDMGYRKESGIIVNSDKIERAIRKLMENSDEKRKKVKEMREKSKMALIDGGSSFISLGDFIKDAMEG.

UDP-alpha-D-glucose-binding residues include A221, Q223, H238, W241, N242, S243, and E246. A261 is a binding site for an anthocyanidin. Positions 262 and 263 each coordinate UDP-alpha-D-glucose.

This sequence belongs to the UDP-glycosyltransferase family. As to expression, expressed in cotyledons, roots and leaves.

It carries out the reaction an anthocyanidin + UDP-alpha-D-glucose + H(+) = an anthocyanidin 3-O-beta-D-glucoside + UDP. Its pathway is pigment biosynthesis; anthocyanin biosynthesis. Functionally, in the presence of other necessary color factors, this glycosylation reaction allows the accumulation of anthocyanin pigments. The chain is Anthocyanidin 3-O-glucosyltransferase 2 (GT2) from Manihot esculenta (Cassava).